A 121-amino-acid polypeptide reads, in one-letter code: Autophagy-related protein 8f (121 aa).

Gly117 carries Phosphatidylethanolamine amidated glycine lipidation. Positions 118–121 (FGSP) are cleaved as a propeptide — removed in mature form.

This sequence belongs to the ATG8 family. Interacts with ATG4. Interacts with NBR1. Interacts with ATI1 and ATI2. Interacts with SH3P2. In terms of processing, the C-terminal 4 residues are removed by ATG4 to expose Gly-117 at the C-terminus. This Gly-117 forms then a thioester bond with the 'Cys-558' of ATG7 (E1-like activating enzyme) before being transferred to the 'Cys-258' of ATG3 (the specific E2 conjugating enzyme), in order to be finally amidated with phosphatidylethanolamine. This lipid modification anchors ATG8 to autophagosomes. In terms of tissue distribution, constitutively expressed.

Its subcellular location is the cytoplasmic vesicle. It localises to the autophagosome membrane. It is found in the vacuole membrane. The protein resides in the cytoplasm. The protein localises to the cytoskeleton. In terms of biological role, ubiquitin-like modifier involved in autophagosomes formation. May mediate the delivery of the autophagosomes to the vacuole via the microtubule cytoskeleton. This Arabidopsis thaliana (Mouse-ear cress) protein is Autophagy-related protein 8f (ATG8F).